Reading from the N-terminus, the 906-residue chain is Catenin alpha-2 (906 aa).

The segment covering 866-880 (KKPLVKREKPEEYQT) has biased composition (basic and acidic residues). The tract at residues 866–892 (KKPLVKREKPEEYQTRVRRGSQKKHIS) is disordered. The segment covering 881–891 (RVRRGSQKKHI) has biased composition (basic residues).

It belongs to the vinculin/alpha-catenin family. In terms of assembly, interacts with CDH1 and CDH2. As to expression, mainly in the nervous system (at protein level).

It is found in the cell membrane. Its subcellular location is the cytoplasm. It localises to the cytoskeleton. The protein localises to the cell junction. The protein resides in the adherens junction. It is found in the cell projection. Its subcellular location is the axon. It localises to the nucleus. Functionally, may function as a linker between cadherin adhesion receptors and the cytoskeleton to regulate cell-cell adhesion and differentiation in the nervous system. The chain is Catenin alpha-2 (CTNNA2) from Gallus gallus (Chicken).